A 1378-amino-acid chain; its full sequence is DNA-directed RNA polymerase subunit beta (1378 aa).

The protein belongs to the RNA polymerase beta chain family. As to quaternary structure, the RNAP catalytic core consists of 2 alpha, 1 beta, 1 beta' and 1 omega subunit. When a sigma factor is associated with the core the holoenzyme is formed, which can initiate transcription.

It catalyses the reaction RNA(n) + a ribonucleoside 5'-triphosphate = RNA(n+1) + diphosphate. In terms of biological role, DNA-dependent RNA polymerase catalyzes the transcription of DNA into RNA using the four ribonucleoside triphosphates as substrates. In Hyphomonas neptunium (strain ATCC 15444), this protein is DNA-directed RNA polymerase subunit beta.